Here is a 950-residue protein sequence, read N- to C-terminus: 2-oxoglutarate dehydrogenase E1 component (950 aa).

It belongs to the alpha-ketoglutarate dehydrogenase family. As to quaternary structure, homodimer. Part of the 2-oxoglutarate dehydrogenase (OGDH) complex composed of E1 (2-oxoglutarate dehydrogenase), E2 (dihydrolipoamide succinyltransferase) and E3 (dihydrolipoamide dehydrogenase); the complex contains multiple copies of the three enzymatic components (E1, E2 and E3). Requires thiamine diphosphate as cofactor.

It carries out the reaction N(6)-[(R)-lipoyl]-L-lysyl-[protein] + 2-oxoglutarate + H(+) = N(6)-[(R)-S(8)-succinyldihydrolipoyl]-L-lysyl-[protein] + CO2. Its function is as follows. E1 component of the 2-oxoglutarate dehydrogenase (OGDH) complex which catalyzes the decarboxylation of 2-oxoglutarate, the first step in the conversion of 2-oxoglutarate to succinyl-CoA and CO(2). This is 2-oxoglutarate dehydrogenase E1 component (odhA) from Cupriavidus necator (strain ATCC 17699 / DSM 428 / KCTC 22496 / NCIMB 10442 / H16 / Stanier 337) (Ralstonia eutropha).